Reading from the N-terminus, the 245-residue chain is Ubiquinone biosynthesis O-methyltransferase (245 aa).

Arg-44, Gly-64, Asp-85, and Met-129 together coordinate S-adenosyl-L-methionine.

The protein belongs to the methyltransferase superfamily. UbiG/COQ3 family.

It catalyses the reaction a 3-demethylubiquinol + S-adenosyl-L-methionine = a ubiquinol + S-adenosyl-L-homocysteine + H(+). The catalysed reaction is a 3-(all-trans-polyprenyl)benzene-1,2-diol + S-adenosyl-L-methionine = a 2-methoxy-6-(all-trans-polyprenyl)phenol + S-adenosyl-L-homocysteine + H(+). Its pathway is cofactor biosynthesis; ubiquinone biosynthesis. In terms of biological role, O-methyltransferase that catalyzes the 2 O-methylation steps in the ubiquinone biosynthetic pathway. This Proteus mirabilis (strain HI4320) protein is Ubiquinone biosynthesis O-methyltransferase.